Reading from the N-terminus, the 208-residue chain is Thymidylate kinase (208 aa).

10-17 (GLEGAGKS) contacts ATP.

This sequence belongs to the thymidylate kinase family.

It carries out the reaction dTMP + ATP = dTDP + ADP. Phosphorylation of dTMP to form dTDP in both de novo and salvage pathways of dTTP synthesis. The sequence is that of Thymidylate kinase from Pseudoalteromonas translucida (strain TAC 125).